A 503-amino-acid chain; its full sequence is ATP synthase subunit alpha (503 aa).

170 to 177 (GDKQTGKT) contributes to the ATP binding site.

It belongs to the ATPase alpha/beta chains family. In terms of assembly, F-type ATPases have 2 components, CF(1) - the catalytic core - and CF(0) - the membrane proton channel. CF(1) has five subunits: alpha(3), beta(3), gamma(1), delta(1), epsilon(1). CF(0) has three main subunits: a(1), b(2) and c(9-12). The alpha and beta chains form an alternating ring which encloses part of the gamma chain. CF(1) is attached to CF(0) by a central stalk formed by the gamma and epsilon chains, while a peripheral stalk is formed by the delta and b chains.

It is found in the cell inner membrane. It carries out the reaction ATP + H2O + 4 H(+)(in) = ADP + phosphate + 5 H(+)(out). Produces ATP from ADP in the presence of a proton gradient across the membrane. The alpha chain is a regulatory subunit. The chain is ATP synthase subunit alpha from Helicobacter pylori (strain HPAG1).